A 330-amino-acid chain; its full sequence is Aspartate--ammonia ligase (330 aa).

The protein belongs to the class-II aminoacyl-tRNA synthetase family. AsnA subfamily.

The protein localises to the cytoplasm. It catalyses the reaction L-aspartate + NH4(+) + ATP = L-asparagine + AMP + diphosphate + H(+). The protein operates within amino-acid biosynthesis; L-asparagine biosynthesis; L-asparagine from L-aspartate (ammonia route): step 1/1. This is Aspartate--ammonia ligase from Streptococcus pyogenes serotype M2 (strain MGAS10270).